Consider the following 343-residue polypeptide: S-adenosylmethionine:tRNA ribosyltransferase-isomerase (343 aa).

This sequence belongs to the QueA family. Monomer.

The protein resides in the cytoplasm. The enzyme catalyses 7-aminomethyl-7-carbaguanosine(34) in tRNA + S-adenosyl-L-methionine = epoxyqueuosine(34) in tRNA + adenine + L-methionine + 2 H(+). It functions in the pathway tRNA modification; tRNA-queuosine biosynthesis. In terms of biological role, transfers and isomerizes the ribose moiety from AdoMet to the 7-aminomethyl group of 7-deazaguanine (preQ1-tRNA) to give epoxyqueuosine (oQ-tRNA). The polypeptide is S-adenosylmethionine:tRNA ribosyltransferase-isomerase (Dehalococcoides mccartyi (strain ATCC BAA-2100 / JCM 16839 / KCTC 5957 / BAV1)).